The chain runs to 1385 residues: DNA-directed RNA polymerase subunit beta (1385 aa).

Belongs to the RNA polymerase beta chain family. As to quaternary structure, the RNAP catalytic core consists of 2 alpha, 1 beta, 1 beta' and 1 omega subunit. When a sigma factor is associated with the core the holoenzyme is formed, which can initiate transcription.

It catalyses the reaction RNA(n) + a ribonucleoside 5'-triphosphate = RNA(n+1) + diphosphate. DNA-dependent RNA polymerase catalyzes the transcription of DNA into RNA using the four ribonucleoside triphosphates as substrates. The chain is DNA-directed RNA polymerase subunit beta from Jannaschia sp. (strain CCS1).